Here is a 560-residue protein sequence, read N- to C-terminus: Membrane protein insertase YidC (560 aa).

Residues 1 to 21 (MDIKRTILIAALAVVSYVMVL) traverse the membrane as a helical segment. The disordered stretch occupies residues 42–66 (VAPGLPDGVPAGNNGASADVPSANA). The next 5 membrane-spanning stretches (helical) occupy residues 341–361 (LELT…FWLL), 367–387 (LLGN…GLFF), 437–457 (LGGC…YWVL), 468–488 (WILW…PIIM), and 515–535 (PIIF…YWVV).

This sequence belongs to the OXA1/ALB3/YidC family. Type 1 subfamily. As to quaternary structure, interacts with the Sec translocase complex via SecD. Specifically interacts with transmembrane segments of nascent integral membrane proteins during membrane integration.

It localises to the cell inner membrane. Functionally, required for the insertion and/or proper folding and/or complex formation of integral membrane proteins into the membrane. Involved in integration of membrane proteins that insert both dependently and independently of the Sec translocase complex, as well as at least some lipoproteins. Aids folding of multispanning membrane proteins. This chain is Membrane protein insertase YidC, found in Pseudomonas putida (strain ATCC 700007 / DSM 6899 / JCM 31910 / BCRC 17059 / LMG 24140 / F1).